The chain runs to 155 residues: RNA pyrophosphohydrolase (155 aa).

In terms of domain architecture, Nudix hydrolase spans 6–148 (GYRANVAIVL…KQEVYRKALT (143 aa)). Positions 38 to 59 (GGVATGETPLQAMYRELHEEIG) match the Nudix box motif.

This sequence belongs to the Nudix hydrolase family. RppH subfamily. Requires a divalent metal cation as cofactor.

Functionally, accelerates the degradation of transcripts by removing pyrophosphate from the 5'-end of triphosphorylated RNA, leading to a more labile monophosphorylated state that can stimulate subsequent ribonuclease cleavage. The polypeptide is RNA pyrophosphohydrolase (Francisella tularensis subsp. tularensis (strain FSC 198)).